Consider the following 122-residue polypeptide: Large ribosomal subunit protein bL19 (122 aa).

This sequence belongs to the bacterial ribosomal protein bL19 family.

Functionally, this protein is located at the 30S-50S ribosomal subunit interface and may play a role in the structure and function of the aminoacyl-tRNA binding site. This is Large ribosomal subunit protein bL19 from Prosthecochloris aestuarii (strain DSM 271 / SK 413).